A 465-amino-acid polypeptide reads, in one-letter code: Nucleolar and spindle-associated protein 1 (465 aa).

The stretch at 32–61 (ADKLLRALKAHLKNEARKENENQDEIQTSA) forms a coiled coil. Disordered stretches follow at residues 44–123 (KNEA…QNHS), 148–207 (VEVP…TPNF), and 252–294 (GVPA…GSAK). The span at 56-75 (EIQTSASSCDEPEIQTSSQE) shows a compositional bias: polar residues. Positions 76–86 (QAEREPDDHVT) are enriched in basic and acidic residues. Residues 87–96 (KTRGRRKTVH) show a composition bias toward basic residues. A Phosphoserine modification is found at S152. Residues 154-166 (PNESQGDENTVSS) are compositionally biased toward polar residues. The segment covering 169–179 (HGIDGNEDPRV) has biased composition (basic and acidic residues). T204 bears the Phosphothreonine mark. The tract at residues 262–405 (GRLSVACTPG…HKGKLKPWGQ (144 aa)) is interaction with microtubules. S265 carries the phosphoserine modification. The residue at position 269 (T269) is a Phosphothreonine. Residues S272, S292, S299, and S334 each carry the phosphoserine modification. The tract at residues 308-338 (SAATKDNEHKRSLTKTPARKSPHVTTSVNTP) is disordered. Phosphothreonine is present on residues T337, T361, and T372. 2 positions are modified to phosphoserine: S375 and S386. The segment at 396–454 (HKGKLKPWGQSKENNSLHEHVNRVSFHKKTYKQPRLQTREEQRKKHERERKEKKEKVLG) is disordered. Positions 407–413 (KENNSLH) match the KEN box motif. Positions 430-457 (RLQTREEQRKKHERERKEKKEKVLGVRR) form a coiled coil. Residues 432 to 453 (QTREEQRKKHERERKEKKEKVL) are compositionally biased toward basic and acidic residues.

The protein belongs to the NUSAP family. As to quaternary structure, interacts with DNA and microtubules. Microtubule bundling is inhibited by IPO7, KPNA2 and KPNB1 while association with DNA is also inhibited by IPO7 and KPNA2. Post-translationally, ubiquitinated. Ubiquitination by FZR1 may lead to proteasome-dependent degradation of this protein.

It is found in the cytoplasm. The protein resides in the nucleus. The protein localises to the nucleolus. It localises to the cytoskeleton. Its subcellular location is the spindle. It is found in the chromosome. Microtubule-associated protein with the capacity to bundle and stabilize microtubules. May associate with chromosomes and promote the organization of mitotic spindle microtubules around them. This Bos taurus (Bovine) protein is Nucleolar and spindle-associated protein 1 (NUSAP1).